The chain runs to 226 residues: Thymidylate kinase (226 aa).

9 to 16 contributes to the ATP binding site; sequence GPEGSGKS.

This sequence belongs to the thymidylate kinase family.

The catalysed reaction is dTMP + ATP = dTDP + ADP. Its function is as follows. Phosphorylation of dTMP to form dTDP in both de novo and salvage pathways of dTTP synthesis. The chain is Thymidylate kinase from Roseiflexus sp. (strain RS-1).